A 154-amino-acid polypeptide reads, in one-letter code: Large ribosomal subunit protein eL24 (154 aa).

Residues 92–154 form a disordered region; it reads AKRNQKPEVR…AAAPRVGGKR (63 aa). Over residues 96-122 the composition is skewed to basic and acidic residues; that stretch reads QKPEVRKAQREQAVKAAKEKKKADQVG. Over residues 129 to 154 the composition is skewed to low complexity; the sequence is KARATAPKTKAPKTVKAAAPRVGGKR.

It belongs to the eukaryotic ribosomal protein eL24 family.

This is Large ribosomal subunit protein eL24 (RPL24) from Branchiostoma belcheri (Amphioxus).